The following is a 116-amino-acid chain: Somatostatin (116 aa).

An N-terminal signal peptide occupies residues 1 to 24 (MLSCRLQCALAALSIVLALGGVTG). Positions 25–88 (APSDPRLRQF…QDEMRLELQR (64 aa)) are excised as a propeptide. Residue alanine 43 is modified to Alanine amide. A disulfide bridge connects residues cysteine 105 and cysteine 116.

The protein belongs to the somatostatin family. C-terminal amidation of the neuronostatin peptide is required for its biological activity, including for the regulation of mean arterial pressure.

The protein localises to the secreted. Functionally, inhibits the secretion of pituitary hormones, including that of growth hormone/somatotropin (GH1), PRL, ACTH, luteinizing hormone (LH) and TSH. Also impairs ghrelin- and GnRH-stimulated secretion of GH1 and LH; the inhibition of ghrelin-stimulated secretion of GH1 can be further increased by neuronostatin. May enhance low-glucose-induced glucagon release by pancreatic alpha cells. This effect may be mediated by binding to GPR107 and PKA activation. May regulate cardiac contractile function. May compromise cardiomyocyte viability. In the central nervous system, may impair memory retention and may affect hippocampal excitability. May also have anxiolytic and anorexigenic effects. May play a role in arterial pressure regulation. May inhibit basal, but not ghrelin- or GnRH-stimulated secretion of GH1 or LH, but does not affect the release of other pituitary hormones, including PRL, ACTH, FSH or TSH. Potentiates inhibitory action of somatostatin on ghrelin-stimulated secretion of GH1, but not that on GnRH-stimulated secretion of LH. In Bos taurus (Bovine), this protein is Somatostatin (SST).